A 358-amino-acid chain; its full sequence is MLERLNFIENKYEELSNKISDPSVMANQKEWQKLCKEHADLEIIVNTYREYKKAQEDLESDKEMLKEESDKELREMAQEEIKELTLKLEDLERELTILLLPKDPNDDKDVFIEIRAGAGGEEAALFASNLLRMYTRYAERKNWKVETMSLNATDIGGFKEVTVAIKGKGAYSRLKYESGVHRVQRVPDTESSGRIHTSTATVAVLPEVDDVDININANDLRIDVYRASGHGGQCVNTTDSAVRITHLPTGLVVTCQDEKSQLKNKEKAMKVLKARLFEAAEAERAASIAEDRKSQVGTGDRSERIRTYNYPQGRITDHRIGLTLYKLETFLDGDIDEVIEALVTEDQAEKMKDLGRVN.

Gln233 is modified (N5-methylglutamine).

This sequence belongs to the prokaryotic/mitochondrial release factor family. Post-translationally, methylated by PrmC. Methylation increases the termination efficiency of RF1.

The protein localises to the cytoplasm. Peptide chain release factor 1 directs the termination of translation in response to the peptide chain termination codons UAG and UAA. This is Peptide chain release factor 1 from Clostridium botulinum (strain Okra / Type B1).